The chain runs to 322 residues: Chromoplast-specific carotenoid-associated protein, chromoplastic (322 aa).

The N-terminal 58 residues, 1–58 (MAFVSQFNQLPCKTLALNPPQPQLTSKPSVFPIASIGATARAAAGKSLISVRPAFKVR), are a transit peptide targeting the chromoplast. The tract at residues 67–88 (GEDKDEKYGDDSSVAVAEKEEE) is disordered.

This sequence belongs to the PAP/fibrillin family. In terms of tissue distribution, expressed in corollas. Not detected in fruits, stems, leaves, and roots.

It localises to the plastid. The protein resides in the chromoplast. Its function is as follows. May be involved in carotenoid sequestration within chromoplasts. This Cucumis sativus (Cucumber) protein is Chromoplast-specific carotenoid-associated protein, chromoplastic (CHRC).